The chain runs to 518 residues: GMP synthase [glutamine-hydrolyzing] (518 aa).

The 195-residue stretch at 6–200 (RLLIIDFGSQ…FVRLAGFKGD (195 aa)) folds into the Glutamine amidotransferase type-1 domain. The Nucleophile role is filled by Cys84. Residues His175 and Glu177 contribute to the active site. The GMPS ATP-PPase domain occupies 201-393 (WTMGAYREEA…LGLPESFIGR (193 aa)). 228 to 234 (SGGVDSS) is a binding site for ATP.

As to quaternary structure, homodimer.

The catalysed reaction is XMP + L-glutamine + ATP + H2O = GMP + L-glutamate + AMP + diphosphate + 2 H(+). It functions in the pathway purine metabolism; GMP biosynthesis; GMP from XMP (L-Gln route): step 1/1. In terms of biological role, catalyzes the synthesis of GMP from XMP. The protein is GMP synthase [glutamine-hydrolyzing] of Cereibacter sphaeroides (strain ATCC 17023 / DSM 158 / JCM 6121 / CCUG 31486 / LMG 2827 / NBRC 12203 / NCIMB 8253 / ATH 2.4.1.) (Rhodobacter sphaeroides).